Consider the following 110-residue polypeptide: uncharacterized protein (110 aa).

This is an uncharacterized protein from Schizosaccharomyces pombe (strain 972 / ATCC 24843) (Fission yeast).